We begin with the raw amino-acid sequence, 318 residues long: Ribose-phosphate pyrophosphokinase 2 (318 aa).

Arg96–Asp101 serves as a coordination point for ATP. Mg(2+)-binding residues include Asp128, His130, Asp139, and Asp143. His130 is an ATP binding site. A binding of phosphoribosylpyrophosphate region spans residues Lys212–Gly227.

Belongs to the ribose-phosphate pyrophosphokinase family. As to quaternary structure, homodimer. The active form is probably a hexamer composed of 3 homodimers. Requires Mg(2+) as cofactor.

The catalysed reaction is D-ribose 5-phosphate + ATP = 5-phospho-alpha-D-ribose 1-diphosphate + AMP + H(+). Its pathway is metabolic intermediate biosynthesis; 5-phospho-alpha-D-ribose 1-diphosphate biosynthesis; 5-phospho-alpha-D-ribose 1-diphosphate from D-ribose 5-phosphate (route I): step 1/1. Activated by magnesium and inorganic phosphate. Competitively or non-competitively inhibited by ADP, 2,3-bisphosphoglyceride or GDP. Functionally, catalyzes the synthesis of phosphoribosylpyrophosphate (PRPP) that is essential for nucleotide synthesis. In Xenopus laevis (African clawed frog), this protein is Ribose-phosphate pyrophosphokinase 2 (prps2).